The primary structure comprises 493 residues: Leucine-rich repeat-containing protein 14 (493 aa).

The LRR 1; degenerate repeat unit spans residues 111–146 (KHTLRVLDMTGLLDDGVEQDPGTMSMWDCTAAVART). An LRR 2; degenerate repeat occupies 194 to 218 (RLCCRDLRAEDLPMRNTVALLQLLD). The LRR 3; degenerate repeat unit spans residues 219 to 246 (AGCLRRVDLRFNNLGLRGLSVIIPHVAR). Residues 247–282 (FQHLASLRLHYVHGDSRQPSVDGEDNFRYFLAQMGR) form an LRR 4; degenerate repeat. LRR repeat units lie at residues 283 to 307 (FTCLRELSMGSSLLSGRLDQLLSTL), 308 to 339 (QSPLESLELAFCALLPEDLRFLARSSHAVHLK), 340 to 360 (KLDLSGNDLSGSQLEPFQGLL), 364 to 391 (AATLLHLELTECQLADTQLLATLPVLTR), and 392 to 416 (CASLRYLGLYGNPLSVAGLRELLRD).

Belongs to the PRAME family. LRRC14 subfamily. In terms of assembly, interacts with IKBKB; disrupts IKBKB-IKBKG interaction preventing I-kappa-B-kinase (IKK) core complex formation and leading to a decrease of IKBKB phosphorylation and NF-kappaB activation. Interacts with CHUK.

The protein localises to the cytoplasm. In terms of biological role, negatively regulates Toll-like receptor-mediated NF-kappa-B signaling by disrupting IKK core complex formation through interaction with IKBKB. The protein is Leucine-rich repeat-containing protein 14 of Bos taurus (Bovine).